We begin with the raw amino-acid sequence, 285 residues long: 4-diphosphocytidyl-2-C-methyl-D-erythritol kinase (285 aa).

The active site involves Lys-10. An ATP-binding site is contributed by 92–102; sequence PFGAGLGGGSS. The active site involves Asp-134.

This sequence belongs to the GHMP kinase family. IspE subfamily.

It catalyses the reaction 4-CDP-2-C-methyl-D-erythritol + ATP = 4-CDP-2-C-methyl-D-erythritol 2-phosphate + ADP + H(+). It participates in isoprenoid biosynthesis; isopentenyl diphosphate biosynthesis via DXP pathway; isopentenyl diphosphate from 1-deoxy-D-xylulose 5-phosphate: step 3/6. In terms of biological role, catalyzes the phosphorylation of the position 2 hydroxy group of 4-diphosphocytidyl-2C-methyl-D-erythritol. This Chloroherpeton thalassium (strain ATCC 35110 / GB-78) protein is 4-diphosphocytidyl-2-C-methyl-D-erythritol kinase.